Here is a 51-residue protein sequence, read N- to C-terminus: MDYAIKPWWAARWETVEPEPEEPVYTDEETVYNEPTINDLIDMEMGHDYSR.

This is an uncharacterized protein from Enterobacteria phage T4 (Bacteriophage T4).